A 193-amino-acid chain; its full sequence is Thymidine kinase (193 aa).

ATP is bound by residues Gly16–Ser23 and Asp89–Gln92. Glu90 acts as the Proton acceptor in catalysis. Zn(2+) contacts are provided by Cys146, Cys149, Cys184, and Cys187.

This sequence belongs to the thymidine kinase family. Homotetramer.

Its subcellular location is the cytoplasm. It catalyses the reaction thymidine + ATP = dTMP + ADP + H(+). This chain is Thymidine kinase, found in Caldanaerobacter subterraneus subsp. tengcongensis (strain DSM 15242 / JCM 11007 / NBRC 100824 / MB4) (Thermoanaerobacter tengcongensis).